The primary structure comprises 342 residues: MLKEPPKNSREKTKNLLLTLQDKICSGLENVDGKGKFTEESWLRDEGGGGRSRVLKNGSIFEQAGVNFSEVQGKELPQSIISQRPEAKGHEWFATGTSMVLHPKNPYIPTVHLNYRYFEAGPVWWFGGGADLTPFYPYLSDVRNFHNEHKKACEKVDQDLHKVFKPWCDEYFFLKHRNESRGIGGIFYDYQDGSGNIYRGNNQKGEASKASQNIGRSNLNWDDLFSLAENCGQAFLPSYLPIIEKRASQAYSSKEREFQLYRRGRYVEFNLVWDRGTIFGLQTNGRTESILMSLPPLARWEYGYKARKNSREEFLTSIFTKPQDWLNDKELEKFCIENNIFD.

Ser-98 lines the substrate pocket. A divalent metal cation-binding residues include His-102 and His-112. The active-site Proton donor is His-112. Residue 114 to 116 (NYR) coordinates substrate. Residues His-146 and His-176 each coordinate a divalent metal cation. An important for dimerization region spans residues 266-301 (YVEFNLVWDRGTIFGLQTNGRTESILMSLPPLARWE).

The protein belongs to the aerobic coproporphyrinogen-III oxidase family. In terms of assembly, homodimer. It depends on a divalent metal cation as a cofactor.

It is found in the cytoplasm. The catalysed reaction is coproporphyrinogen III + O2 + 2 H(+) = protoporphyrinogen IX + 2 CO2 + 2 H2O. Its pathway is porphyrin-containing compound metabolism; protoporphyrin-IX biosynthesis; protoporphyrinogen-IX from coproporphyrinogen-III (O2 route): step 1/1. Functionally, involved in the heme and chlorophyll biosynthesis. Catalyzes the aerobic oxidative decarboxylation of propionate groups of rings A and B of coproporphyrinogen-III to yield the vinyl groups in protoporphyrinogen-IX. The protein is Oxygen-dependent coproporphyrinogen-III oxidase of Prochlorococcus marinus (strain MIT 9301).